Here is a 545-residue protein sequence, read N- to C-terminus: Chromosomal replication initiator protein DnaA (545 aa).

The interval 1-72 (MNDFWQHCSA…DMARDFWQAP (72 aa)) is domain I, interacts with DnaA modulators. The interval 72–208 (PVDVQFVLDP…GETDSMYERS (137 aa)) is domain II. A compositionally biased stretch (low complexity) spans 90-105 (AAAPAPASARPASAPG). Disordered regions lie at residues 90–112 (AAAPAPASARPASAPGSMGGSAG) and 181–204 (AAARRTWRPGQSASSNGNGETDSM). Over residues 189–201 (PGQSASSNGNGET) the composition is skewed to polar residues. The interval 209–425 (KLNPVLTFDN…GALRKILAYS (217 aa)) is domain III, AAA+ region. Residues glycine 253, glycine 255, lysine 256, and threonine 257 each contribute to the ATP site. Residues 426–545 (KFHGREITIE…LHVLEQTLKG (120 aa)) are domain IV, binds dsDNA.

The protein belongs to the DnaA family. In terms of assembly, oligomerizes as a right-handed, spiral filament on DNA at oriC.

It is found in the cytoplasm. Functionally, plays an essential role in the initiation and regulation of chromosomal replication. ATP-DnaA binds to the origin of replication (oriC) to initiate formation of the DNA replication initiation complex once per cell cycle. Binds the DnaA box (a 9 base pair repeat at the origin) and separates the double-stranded (ds)DNA. Forms a right-handed helical filament on oriC DNA; dsDNA binds to the exterior of the filament while single-stranded (ss)DNA is stabiized in the filament's interior. The ATP-DnaA-oriC complex binds and stabilizes one strand of the AT-rich DNA unwinding element (DUE), permitting loading of DNA polymerase. After initiation quickly degrades to an ADP-DnaA complex that is not apt for DNA replication. Binds acidic phospholipids. In Paraburkholderia phytofirmans (strain DSM 17436 / LMG 22146 / PsJN) (Burkholderia phytofirmans), this protein is Chromosomal replication initiator protein DnaA.